The sequence spans 260 residues: Carbonic anhydrase 3 (260 aa).

A2 is modified (N-acetylalanine). One can recognise an Alpha-carbonic anhydrase domain in the interval 3 to 259; sequence KEWGYADHNG…IKGRIVKASF (257 aa). Phosphoserine occurs at positions 29, 43, 50, and 55. Residues 64-67 form an involved in proton transfer region; the sequence is KTCR. A Phosphothreonine modification is found at T73. H94, H96, and H119 together coordinate Zn(2+). Residue Y127 is modified to Phosphotyrosine. Phosphothreonine is present on T176. C182 and C187 each carry S-glutathionyl cysteine. Substrate is bound at residue 198–199; the sequence is TT. T216 is subject to Phosphothreonine. At S219 the chain carries Phosphoserine.

Belongs to the alpha-carbonic anhydrase family. Zn(2+) is required as a cofactor. Post-translationally, S-thiolated both by thiol-disulfide exchange with glutathione disulfide and by oxyradical-initiated S-thiolation with reduced glutathione. In terms of processing, S-glutathionylated in hepatocytes under oxidative stress.

It is found in the cytoplasm. It catalyses the reaction hydrogencarbonate + H(+) = CO2 + H2O. Inhibited by acetazolamide. In terms of biological role, reversible hydration of carbon dioxide. The polypeptide is Carbonic anhydrase 3 (Sus scrofa (Pig)).